A 328-amino-acid polypeptide reads, in one-letter code: Sphingolipid delta(4)-desaturase DES1-like (328 aa).

Helical transmembrane passes span 50–70 (PLAF…ATLL), 78–98 (ILTV…LAIH), and 114–134 (WLGI…FQKY). The Histidine box-1 motif lies at 98–102 (HELSH). The short motif at 135-139 (HLEHH) is the Histidine box-2 element. Transmembrane regions (helical) follow at residues 164–184 (LSKS…PLFL), 192–212 (WEFT…YFFG), and 217–237 (AYLI…GHFI). Positions 266-270 (HNEHH) match the Histidine box-3 motif.

This sequence belongs to the fatty acid desaturase type 1 family. DEGS subfamily.

It is found in the endoplasmic reticulum membrane. It catalyses the reaction an N-acylsphinganine + 2 Fe(II)-[cytochrome b5] + O2 + 2 H(+) = an N-acylsphing-4-enine + 2 Fe(III)-[cytochrome b5] + 2 H2O. Its function is as follows. Sphingolipid-delta-4-desaturase required for the biosynthesis of delta-4-unsaturated sphingolipids and derivatives. This is Sphingolipid delta(4)-desaturase DES1-like from Oryza sativa subsp. japonica (Rice).